The following is a 127-amino-acid chain: Flagellar hook-basal body complex protein FliE (127 aa).

The protein belongs to the FliE family.

It is found in the bacterial flagellum basal body. The chain is Flagellar hook-basal body complex protein FliE from Leptospira interrogans serogroup Icterohaemorrhagiae serovar copenhageni (strain Fiocruz L1-130).